Consider the following 398-residue polypeptide: S-adenosylmethionine synthase (398 aa).

Position 17 (histidine 17) interacts with ATP. Aspartate 19 is a binding site for Mg(2+). Residue glutamate 45 participates in K(+) binding. L-methionine contacts are provided by glutamate 58 and glutamine 101. The tract at residues 101 to 111 (QSPDIAQGVDK) is flexible loop. ATP contacts are provided by residues 176–178 (DGK), 243–244 (RF), aspartate 252, 258–259 (RK), and lysine 279. Position 252 (aspartate 252) interacts with L-methionine. Lysine 283 serves as a coordination point for L-methionine.

This sequence belongs to the AdoMet synthase family. As to quaternary structure, homotetramer; dimer of dimers. Mg(2+) is required as a cofactor. The cofactor is K(+).

The protein resides in the cytoplasm. The catalysed reaction is L-methionine + ATP + H2O = S-adenosyl-L-methionine + phosphate + diphosphate. It functions in the pathway amino-acid biosynthesis; S-adenosyl-L-methionine biosynthesis; S-adenosyl-L-methionine from L-methionine: step 1/1. Its function is as follows. Catalyzes the formation of S-adenosylmethionine (AdoMet) from methionine and ATP. The overall synthetic reaction is composed of two sequential steps, AdoMet formation and the subsequent tripolyphosphate hydrolysis which occurs prior to release of AdoMet from the enzyme. In Staphylococcus haemolyticus (strain JCSC1435), this protein is S-adenosylmethionine synthase.